The following is a 677-amino-acid chain: Secretogranin-1 (677 aa).

Residues 1–20 form the signal peptide; it reads MQPAMLLGLLGAAALAAVSS. A disulfide bridge connects residues Cys-36 and Cys-57. Disordered regions lie at residues 63 to 505 and 531 to 558; these read KSGK…RQYE and NSDFEKRGNPDDSFLEDEGEDRNGVTLT. The segment covering 64 to 90 has biased composition (basic and acidic residues); sequence SGKEVKGEEKGENQNSKFEVRLLRDPA. Residues Ser-93, Ser-99, and Ser-100 each carry the phosphoserine modification. Ser-93 carries O-linked (Xyl...) (chondroitin sulfate) serine glycosylation. Thr-115 carries O-linked (GalNAc...) threonine glycosylation. A compositionally biased stretch (basic and acidic residues) spans 118–133; the sequence is GNEKWTEGGGHSREGV. Phosphoserine occurs at positions 129, 147, 190, and 220. 2 stretches are compositionally biased toward basic and acidic residues: residues 148-192 and 200-249; these read KEAK…DSGE and KRSE…KPQE. Residue Ser-237 is glycosylated (O-linked (Xyl...) (chondroitin sulfate) serine). Residues 251–280 show a composition bias toward acidic residues; sequence TDQDQSQEESQEGEEGEEGEEGEEGEEDSA. Residues Ser-256, Ser-260, Ser-300, Ser-301, Ser-318, and Ser-342 each carry the phosphoserine modification. Basic and acidic residues predominate over residues 306–322; it reads PLSEERRPSPKESKEAD. A Sulfotyrosine modification is found at Tyr-348. 2 stretches are compositionally biased toward basic and acidic residues: residues 363–409 and 421–455; these read RGSE…ERSY and GREPGAHSALDTREEKRLLDEGHYPVRESPIDTAK. A phosphoserine mark is found at Ser-365, Ser-375, and Ser-378. Tyr-472 is modified (sulfotyrosine). Positions 491-504 are enriched in basic and acidic residues; that stretch reads EESREEVRFPDRQY. Phosphoserine is present on residues Ser-493, Ser-532, and Ser-543. Tyr-566 and Tyr-624 each carry sulfotyrosine. The disordered stretch occupies residues 622-646; it reads DFYDSEEQMGPHQEANDEKARADQR. A Phosphoserine modification is found at Ser-626. Positions 635 to 646 are enriched in basic and acidic residues; the sequence is EANDEKARADQR.

It belongs to the chromogranin/secretogranin protein family. In terms of assembly, interacts with ITPR1 in the secretory granules.

It is found in the secreted. Its function is as follows. Secretogranin-1 is a neuroendocrine secretory granule protein, which may be the precursor for other biologically active peptides. In Mus musculus (Mouse), this protein is Secretogranin-1 (Chgb).